Here is a 57-residue protein sequence, read N- to C-terminus: MTVPKKRTSMSKKRIRKNIWKRKGYWAALKALSLAKSISTGHSKSFFVQQTSNKAAE.

It belongs to the bacterial ribosomal protein bL32 family.

It is found in the plastid. The protein resides in the chloroplast. This chain is Large ribosomal subunit protein bL32c, found in Drimys granadensis.